The sequence spans 78 residues: MSCSGGNCGCGSSCSCGSGCGGCRMLTDLGEERSSTSQTMIMGVAPQKGHFEELETAAGSDNGCKCGSNCTCDPCNCK.

It belongs to the metallothionein superfamily. Type 15 family.

Its function is as follows. Metallothioneins have a high content of cysteine residues that bind various heavy metals. This is Metallothionein-like protein type 2 from Musa acuminata (Banana).